We begin with the raw amino-acid sequence, 877 residues long: MSFIKKIKHYFADPADLPQDEAPDSVPGLVPPPSNFVPVYPEPTYSDTVSKKGTIVRVVRHTASKLTKHGDSSQSLSTLPNNDISVGEYVEPLPSVPGWLKQNIFSHFGTRLLHYLRSLFPIMNWLPRYNWNWLVYDFIAGITVGCVVVPQGMSYAKVATLPAQYGLYSSFVGVAIYCIFATSKDVSIGPVAVMSLVTSKVIANVQAKDPNYDAAQIGTTLALLAGAITCGLGLLRLGFIIEFIPVPAVAGFTTGSALNIMAGQVSSLMGYKSRVHTNAATYRVIIQTLQNLPHTKVDAAFGLVSLFILYLVRYTCQHLIKRYTKFQRVFFLTNVLRSAVIIIVGTAISYGVCKHRRENPPISILGTVPSGFRDMGVPVISRKLCADLASELPVSVIVLLLEHISIAKSFGRVNDYKVIPDQELIAMGATNLIGVFFHAYPATGSFSRSAINAKSGVRTPLGGIFTAGVVVLALYCLTGAFYYIPNAVLSAVIIHSVFDLIIPWRQTLLFWRMQPLEALIFICAVFVSVFSSIENGIYTAVCLSAALLLFRIAKPSGSFLGILKIANKFDDDENSIDVVRDIYVPLNQKGMNPNLTVRDPPAGVLIFRLQESFTYPNAGHVNSMLTSKAKTVTRRGNANIYKKASDRPWNDPAPRKKKNAPEVEDTRPLLRAIILDFSAVNHIDTTGVQALVDTRKELEIYAGDEVEFHFTDINNDWIKRTLVAAGFGKARDATKYTSRSIEVGSAAPLRDIETPMAPGNSRIVMPSSVRVRPFDEEEAIESSIPAIVSEDGADSDTISVSDDKDKKVEGHRPSQDPTFSHHEYYPVISTTYPFFHVDVTSAVVDIQYRHVLDVNYKPKIVTNEVENENIEHSDGAA.

13 consecutive transmembrane segments (helical) span residues 133–153 (WLVY…PQGM), 161–181 (LPAQ…CIFA), 186–206 (VSIG…ANVQ), 221–241 (LALL…GFII), 243–263 (FIPV…IMAG), 292–312 (LPHT…LYLV), 329–349 (VFFL…TAIS), 384–404 (LCAD…LEHI), 424–444 (LIAM…PATG), 461–481 (LGGI…TGAF), 484–504 (IPNA…IIPW), 518–538 (ALIF…NGIY), and 543–563 (LSAA…LGIL). One can recognise an STAS domain in the interval 594-747 (NLTVRDPPAG…SRSIEVGSAA (154 aa)). 2 disordered regions span residues 643–663 (KASD…APEV) and 793–821 (ADSD…TFSH). Positions 801–821 (SDDKDKKVEGHRPSQDPTFSH) are enriched in basic and acidic residues.

This sequence belongs to the SLC26A/SulP transporter (TC 2.A.53) family.

It localises to the membrane. High affinity uptake of sulfate into the cell. This chain is Probable sulfate permease C3H7.02, found in Schizosaccharomyces pombe (strain 972 / ATCC 24843) (Fission yeast).